We begin with the raw amino-acid sequence, 697 residues long: Polyribonucleotide nucleotidyltransferase (697 aa).

2 residues coordinate Mg(2+): Asp490 and Asp496. Positions 557 to 616 (PKVVTMTIKPEKIRDVIGPGGKKINEIIDETGVKLDIEQDGTIFIGAVDKDAIARARSII) constitute a KH domain. The 69-residue stretch at 626 to 694 (GQVYEGKVKR…KQGRVNASHK (69 aa)) folds into the S1 motif domain.

It belongs to the polyribonucleotide nucleotidyltransferase family. Requires Mg(2+) as cofactor.

The protein localises to the cytoplasm. It carries out the reaction RNA(n+1) + phosphate = RNA(n) + a ribonucleoside 5'-diphosphate. Its function is as follows. Involved in mRNA degradation. Catalyzes the phosphorolysis of single-stranded polyribonucleotides processively in the 3'- to 5'-direction. The sequence is that of Polyribonucleotide nucleotidyltransferase from Staphylococcus saprophyticus subsp. saprophyticus (strain ATCC 15305 / DSM 20229 / NCIMB 8711 / NCTC 7292 / S-41).